Reading from the N-terminus, the 511-residue chain is Inositol-3-phosphate synthase (511 aa).

NAD(+) contacts are provided by glycine 70, asparagine 71, asparagine 72, aspartate 143, serine 179, isoleucine 180, glutamine 190, arginine 193, serine 230, alanine 231, asparagine 232, threonine 233, glycine 281, serine 282, aspartate 306, threonine 309, asparagine 340, asparagine 341, aspartate 342, lysine 355, glycine 393, aspartate 394, aspartate 422, and serine 423.

It belongs to the myo-inositol 1-phosphate synthase family. Requires NAD(+) as cofactor.

It is found in the cytoplasm. It carries out the reaction D-glucose 6-phosphate = 1D-myo-inositol 3-phosphate. The protein operates within polyol metabolism; myo-inositol biosynthesis; myo-inositol from D-glucose 6-phosphate: step 1/2. In terms of biological role, key enzyme in myo-inositol biosynthesis pathway that catalyzes the conversion of glucose 6-phosphate to 1-myo-inositol 1-phosphate in a NAD-dependent manner. Rate-limiting enzyme in the synthesis of all inositol-containing compounds. The chain is Inositol-3-phosphate synthase (ino1) from Dictyostelium discoideum (Social amoeba).